The following is a 343-amino-acid chain: Protein RecA (343 aa).

65-72 (GPESSGKT) serves as a coordination point for ATP.

It belongs to the RecA family.

The protein resides in the cytoplasm. Its function is as follows. Can catalyze the hydrolysis of ATP in the presence of single-stranded DNA, the ATP-dependent uptake of single-stranded DNA by duplex DNA, and the ATP-dependent hybridization of homologous single-stranded DNAs. It interacts with LexA causing its activation and leading to its autocatalytic cleavage. The protein is Protein RecA of Campylobacter jejuni subsp. doylei (strain ATCC BAA-1458 / RM4099 / 269.97).